The chain runs to 211 residues: MRFVLASASPARLSVLRSAGIDPLVRVSGVDEDAVAAGLTDPTPPELVTALAAAKAEAVLPAVAAEAPDAVVVGCDSMLSAPDGEIVGKPGTPQAAAERWRKAAGRSGELLTGHAVVVLRGGEVVARTQGHLATTVRFSEPTEAELDAYIATGEPLHVAGGFTLEGFGGWFIEGVDGDPSSVLGISLPLTRKLLAEVGVSVVTLWGPPVAR.

Catalysis depends on aspartate 76, which acts as the Proton acceptor.

This sequence belongs to the Maf family. The cofactor is a divalent metal cation.

It localises to the cytoplasm. The catalysed reaction is a ribonucleoside 5'-triphosphate + H2O = a ribonucleoside 5'-phosphate + diphosphate + H(+). It catalyses the reaction a 2'-deoxyribonucleoside 5'-triphosphate + H2O = a 2'-deoxyribonucleoside 5'-phosphate + diphosphate + H(+). Its function is as follows. Nucleoside triphosphate pyrophosphatase. May have a dual role in cell division arrest and in preventing the incorporation of modified nucleotides into cellular nucleic acids. This chain is Nucleoside triphosphate pyrophosphatase, found in Saccharopolyspora erythraea (strain ATCC 11635 / DSM 40517 / JCM 4748 / NBRC 13426 / NCIMB 8594 / NRRL 2338).